Reading from the N-terminus, the 572-residue chain is RNA polymerase sigma factor sigB (572 aa).

Residues 1–39 (MSSCLLPQFKCPPDSFSIHFRTSFCAPKHNKGSVFFQPQ) constitute a chloroplast transit peptide. The disordered stretch occupies residues 215-249 (TRQTERKARRAKGLEKTASGIPSVKTGSSPKKKRL). The Polymerase core binding signature appears at 360–373 (DLVQEGCRGLVRGA). The segment at residues 530–549 (LQEIGEMMGVSRERVRQIES) is a DNA-binding region (H-T-H motif).

Belongs to the sigma-70 factor family. Highly expressed in cotyledons, to a lesser extent in leaves, sepals and siliques, and barely expressed in roots. Present in seedlings.

The protein resides in the plastid. Its subcellular location is the chloroplast. Required for the transition of plastids into chloroplasts by coordinating nuclear and chloroplastic genomes under light conditions. Sigma factors are initiation factors that promote the attachment of plastid-encoded RNA polymerase (PEP) to specific initiation sites and are then released. Promotes the biosynthesis of plastid-encoded tRNAs (e.g. trnE-UUC and trnV-UAC). This is RNA polymerase sigma factor sigB (SIGB) from Arabidopsis thaliana (Mouse-ear cress).